The sequence spans 462 residues: NADH-quinone oxidoreductase subunit N 1 (462 aa).

Helical transmembrane passes span 4–24 (FVVA…VLCL), 32–52 (AGFY…WAVA), 60–80 (IACF…ALLA), 88–108 (FAGD…LLLA), 113–133 (WIML…LIAA), 148–168 (FLPG…IYAA), 178–198 (LAAP…GVGF), 220–240 (VAAF…LHVC), 251–271 (LWPA…LGAV), 279–299 (LLAY…MAVN), 307–327 (LFYL…VGAL), 351–371 (AGVL…AGFV), 374–394 (FLVF…FGII), 416–436 (LIAH…ALGV), and 439–459 (AGLV…AALF).

This sequence belongs to the complex I subunit 2 family. NDH-1 is composed of 14 different subunits. Subunits NuoA, H, J, K, L, M, N constitute the membrane sector of the complex.

It is found in the cell inner membrane. The catalysed reaction is a quinone + NADH + 5 H(+)(in) = a quinol + NAD(+) + 4 H(+)(out). In terms of biological role, NDH-1 shuttles electrons from NADH, via FMN and iron-sulfur (Fe-S) centers, to quinones in the respiratory chain. The immediate electron acceptor for the enzyme in this species is believed to be ubiquinone. Couples the redox reaction to proton translocation (for every two electrons transferred, four hydrogen ions are translocated across the cytoplasmic membrane), and thus conserves the redox energy in a proton gradient. This is NADH-quinone oxidoreductase subunit N 1 from Solidesulfovibrio magneticus (strain ATCC 700980 / DSM 13731 / RS-1) (Desulfovibrio magneticus).